The chain runs to 1046 residues: Hemoglobin-haptoglobin-binding protein A (1046 aa).

A signal peptide spans 1–24 (MTNFRLNLLAYSVMLGLTAGVAYA). 4 repeat units span residues 26 to 29 (QPTN), 30 to 33 (QPTN), 34 to 37 (QPTN), and 38 to 41 (QPTN). The tract at residues 26 to 41 (QPTNQPTNQPTNQPTN) is 4 X 4 AA tandem repeats of Q-P-T-N. The short motif at 51–58 (EQINVLGS) is the TonB box element. The 128-residue stretch at 61-188 (HNDNTPPKIA…LGGSVSFDTK (128 aa)) folds into the TBDR plug domain. One can recognise a TBDR beta-barrel domain in the interval 196-1046 (NKNYYASYKR…NYRMSVQFEF (851 aa)). The TonB C-terminal box signature appears at 1029 to 1046 (NRFYAPGRNYRMSVQFEF).

The protein belongs to the TonB-dependent receptor family. Hemoglobin/haptoglobin binding protein subfamily.

It is found in the cell outer membrane. In terms of biological role, acts as a receptor for the hemoglobin/haptoglobin complex of the human host and is required for heme uptake. Does not bind hemoglobin alone. This is Hemoglobin-haptoglobin-binding protein A (hhuA) from Haemophilus influenzae.